The chain runs to 367 residues: 2-aminoethylphosphonate--pyruvate transaminase (367 aa).

Lys-193 bears the N6-(pyridoxal phosphate)lysine mark.

Belongs to the class-V pyridoxal-phosphate-dependent aminotransferase family. PhnW subfamily. Homodimer. Pyridoxal 5'-phosphate is required as a cofactor.

The catalysed reaction is (2-aminoethyl)phosphonate + pyruvate = phosphonoacetaldehyde + L-alanine. Involved in phosphonate degradation. The polypeptide is 2-aminoethylphosphonate--pyruvate transaminase (Vibrio cholerae serotype O1 (strain ATCC 39541 / Classical Ogawa 395 / O395)).